The following is a 186-amino-acid chain: Probable calcium-binding protein CML25 (186 aa).

Residues 1–17 (MFNKNQGSNGGSSSNVG) show a composition bias toward low complexity. The tract at residues 1–23 (MFNKNQGSNGGSSSNVGIGADSP) is disordered. EF-hand domains follow at residues 33 to 68 (TEIR…LGHE), 69 to 104 (VPEE…GMDQ), 106 to 141 (DVLE…LGDE), and 142 to 177 (CSIA…GSRR). Residues D46, N48, D50, K52, and E57 each contribute to the Ca(2+) site. Ca(2+) is bound by residues D119, D121, N123, S125, E130, D155, D157, D159, T161, and E166.

In terms of biological role, potential calcium sensor. This chain is Probable calcium-binding protein CML25 (CML25), found in Arabidopsis thaliana (Mouse-ear cress).